The chain runs to 650 residues: Growth hormone receptor (650 aa).

Residues 1–24 form the signal peptide; the sequence is MDLCQVFLTLALAVTSSTFSGSEA. Topologically, residues 25 to 273 are extracellular; it reads TPATLGKASP…ILEACEEDIQ (249 aa). 2 disulfide bridges follow: cysteine 56–cysteine 66 and cysteine 109–cysteine 120. An N-linked (GlcNAc...) asparagine glycan is attached at asparagine 123. Cysteine 134 and cysteine 148 are joined by a disulfide. The Fibronectin type-III domain occupies 159-262; it reads PPIGLNWTLL…EVLRVIFPQT (104 aa). N-linked (GlcNAc...) asparagine glycans are attached at residues asparagine 164, asparagine 169, and asparagine 208. Residues 248–252 carry the WSXWS motif motif; that stretch reads YSEFS. The chain crosses the membrane as a helical span at residues 274 to 297; the sequence is FPWFLIIIFGIFGVAVMLFVVIFS. The Cytoplasmic segment spans residues 298-650; that stretch reads KQQRIKMLIL…STDQLNKIMQ (353 aa). Residues 303–390 form a required for JAK2 binding region; that stretch reads KMLILPPVPV…HEKSAGILGA (88 aa). A Box 1 motif motif is present at residues 306-314; it reads ILPPVPVPK. The UbE motif signature appears at 349 to 358; sequence DSWVEFIELD. Residue serine 350 is modified to Phosphoserine. A disordered region spans residues 466-486; that stretch reads KPQPLLSSETEATHQLASTPM. Over residues 470 to 486 the composition is skewed to polar residues; the sequence is LLSSETEATHQLASTPM. Tyrosine 498 and tyrosine 606 each carry phosphotyrosine.

It belongs to the type I cytokine receptor family. Type 1 subfamily. As to quaternary structure, on growth hormone (GH) binding, forms homodimers and binds JAK2 via a box 1-containing domain. The soluble form (GHBP) is produced by phorbol ester-promoted proteolytic cleavage at the cell surface (shedding) by ADAM17/TACE. Shedding is inhibited by growth hormone (GH) binding to the receptor probably due to a conformational change in GHR rendering the receptor inaccessible to ADAM17. In terms of processing, on GH binding, phosphorylated on tyrosine residues in the cytoplasmic domain by JAK2. Post-translationally, ubiquitinated by the ECS(SOCS2) complex following ligand-binding and phosphorylation by JAK2, leading to its degradation by the proteasome. Regulation by the ECS(SOCS2) complex acts as a negative feedback loop of growth hormone receptor signaling. Ubiquitination is not sufficient for GHR internalization. As to expression, expressed in all tissues tested including, liver, heart, adipose tissue, mammary gland, testes, ovary, brain, kidney and muscle. Highest levels in liver.

The protein localises to the cell membrane. Its subcellular location is the secreted. Its function is as follows. Receptor for pituitary gland growth hormone (GH1) involved in regulating postnatal body growth. On ligand binding, couples to the JAK2/STAT5 pathway. Functionally, the soluble form (GHBP) acts as a reservoir of growth hormone in plasma and may be a modulator/inhibitor of GH signaling. The protein is Growth hormone receptor (Ghr) of Mus musculus (Mouse).